The sequence spans 394 residues: NAC domain-containing protein 26 (394 aa).

An NAC domain is found at Val7–Lys156. A DNA-binding region spans residues Ile107–Val162.

The protein belongs to the plant vascular related NAC-domain protein family. As to quaternary structure, interacts with NAC083/VNI2. In terms of tissue distribution, detected in root vessels of protoxylems, outermost metaxylems, inner metaxylems, shoots and hypocotyls. Expressed in roots, hypocotyls, cotyledons and leaves. Expressed in developing xylems. Specifically expressed in vessels in the secondary xylem of the root-hypocotyl region, and in vessels but not in interfascicular fibers in stems.

The protein resides in the nucleus. Transcription activator that binds to the secondary wall NAC binding element (SNBE), 5'-(T/A)NN(C/T)(T/C/G)TNNNNNNNA(A/C)GN(A/C/T)(A/T)-3', in the promoter of target genes. Involved in xylem formation by promoting the expression of secondary wall-associated transcription factors and of genes involved in secondary wall biosynthesis and programmed cell death, genes driven by the secondary wall NAC binding element (SNBE). Triggers thickening of secondary walls. The protein is NAC domain-containing protein 26 of Arabidopsis thaliana (Mouse-ear cress).